The chain runs to 119 residues: Ribonuclease P protein component (119 aa).

The protein belongs to the RnpA family. In terms of assembly, consists of a catalytic RNA component (M1 or rnpB) and a protein subunit.

The catalysed reaction is Endonucleolytic cleavage of RNA, removing 5'-extranucleotides from tRNA precursor.. Functionally, RNaseP catalyzes the removal of the 5'-leader sequence from pre-tRNA to produce the mature 5'-terminus. It can also cleave other RNA substrates such as 4.5S RNA. The protein component plays an auxiliary but essential role in vivo by binding to the 5'-leader sequence and broadening the substrate specificity of the ribozyme. The protein is Ribonuclease P protein component of Beutenbergia cavernae (strain ATCC BAA-8 / DSM 12333 / CCUG 43141 / JCM 11478 / NBRC 16432 / NCIMB 13614 / HKI 0122).